The following is a 188-amino-acid chain: Ribosome maturation factor RimP (188 aa).

It belongs to the RimP family.

Its subcellular location is the cytoplasm. Required for maturation of 30S ribosomal subunits. In Erythrobacter litoralis (strain HTCC2594), this protein is Ribosome maturation factor RimP.